The primary structure comprises 214 residues: Putative nickel/cobalt efflux system MJ1092 (214 aa).

Transmembrane regions (helical) follow at residues 2–22 (VMIM…LHAL), 46–66 (ILLG…LGIL), 79–99 (VHDM…IWII), 116–136 (VITL…AVLL), 149–169 (IYVA…AVAF), and 188–208 (LPLI…AHPI).

Belongs to the NiCoT transporter (TC 2.A.52) family.

Its subcellular location is the cell membrane. Efflux system for nickel and cobalt. In Methanocaldococcus jannaschii (strain ATCC 43067 / DSM 2661 / JAL-1 / JCM 10045 / NBRC 100440) (Methanococcus jannaschii), this protein is Putative nickel/cobalt efflux system MJ1092.